Reading from the N-terminus, the 431-residue chain is Glutamate-1-semialdehyde 2,1-aminomutase 1 (431 aa).

The residue at position 268 (lysine 268) is an N6-(pyridoxal phosphate)lysine.

Belongs to the class-III pyridoxal-phosphate-dependent aminotransferase family. HemL subfamily. Homodimer. Pyridoxal 5'-phosphate is required as a cofactor.

It localises to the cytoplasm. It catalyses the reaction (S)-4-amino-5-oxopentanoate = 5-aminolevulinate. It functions in the pathway porphyrin-containing compound metabolism; protoporphyrin-IX biosynthesis; 5-aminolevulinate from L-glutamyl-tRNA(Glu): step 2/2. The chain is Glutamate-1-semialdehyde 2,1-aminomutase 1 from Bacillus pumilus (strain SAFR-032).